We begin with the raw amino-acid sequence, 116 residues long: UPF0127 protein PF1050 (116 aa).

It belongs to the UPF0127 family.

The sequence is that of UPF0127 protein PF1050 from Pyrococcus furiosus (strain ATCC 43587 / DSM 3638 / JCM 8422 / Vc1).